Consider the following 36-residue polypeptide: MDTRLLVIAAPVLVAASWALFNIGRLAIQQIQRLSR.

The Lumenal portion of the chain corresponds to 1–4 (MDTR). A helical transmembrane segment spans residues 5–23 (LLVIAAPVLVAASWALFNI). The Stromal segment spans residues 24-36 (GRLAIQQIQRLSR).

It belongs to the PsbY family. PSII is composed of 1 copy each of membrane proteins PsbA, PsbB, PsbC, PsbD, PsbE, PsbF, PsbH, PsbI, PsbJ, PsbK, PsbL, PsbM, PsbT, PsbX, PsbY, PsbZ, Psb30/Ycf12, at least 3 peripheral proteins of the oxygen-evolving complex and a large number of cofactors. It forms dimeric complexes.

It localises to the plastid. Its subcellular location is the chloroplast thylakoid membrane. Loosely associated component of the core of photosystem II (PSII), it is not always seen in crystals. PSII is a light-driven water plastoquinone oxidoreductase, using light energy to abstract electrons from H(2)O, generating a proton gradient subsequently used for ATP formation. The sequence is that of Photosystem II reaction center protein Y from Thalassiosira pseudonana (Marine diatom).